We begin with the raw amino-acid sequence, 345 residues long: HTH-type transcriptional regulator reg1 (345 aa).

Positions 1-58 (MTTRLADIAAQAGVSEATVSRVLNGKPGVAATTRQSVLAALDVLGYERPVRLRRRSAG) constitute an HTH lacI-type domain. The segment at residues 5–24 (LADIAAQAGVSEATVSRVLN) is a DNA-binding region (H-T-H motif).

Its function is as follows. Transcription repressor involved in control of expression of alpha-amylase and chitinase genes and of actinorhodin production. In Streptomyces lividans, this protein is HTH-type transcriptional regulator reg1 (reg1).